Reading from the N-terminus, the 424-residue chain is Myb family transcription factor RLI1 (424 aa).

A disordered region spans residues 144-165 (RPQKRDSGERTPLPPPSQQQHQ). The HTH myb-type domain occupies 238 to 298 (APSKTRIRWT…HLQKYRIAKY (61 aa)). Positions 269–294 (PKGILKLMNSDGLTIYHIKSHLQKYR) form a DNA-binding region, H-T-H motif. A coiled-coil region spans residues 326–391 (MQITEALRVQ…ELDDVVAFAA (66 aa)). The LHEQLE signature appears at 342–347 (LHEQLE).

The protein belongs to the MYB-CC family. In terms of assembly, interacts with SPX1 and SPX2 in the nucleus; these interactions prevent binding to the promoters of target genes, thus regulating negatively leaf inclination in response to phosphate (Pi) starvation. As to quaternary structure, homodimer. Interacts with PHR2 in the nucleus. In terms of tissue distribution, mostly expressed in roots and leaves blades and, to a lower extent, in leaves sheaths, culms and panicles. Localized in leaves lamina joints. Expressed equally in shoots and roots. As to expression, mostly expressed in shoots and, to a lower extent, in roots.

Its subcellular location is the nucleus. Its function is as follows. Transcription factor binding to specific DNA sequences of target genes promoters, such as the motif R1BS 5'-NAKATNCN-3' and the motif P1BS 5'-GNATATNC-3' to trigger their expression. Nitrate-induced component involved in modulating phosphate (Pi) response and homeostasis together with PHR2; activates directly the expression of Pi starvation-induced (PSI) genes upon nitrate disponibility, thus triggering the nitrate-induced phosphate response (NIPR) promoting Pi uptake activity. In terms of biological role, binds preferentially to the P1BS motif 5'-GNATATNC-3' in target genes promoters. Binds preferentially to the R1BS motif 5'-NAKATNCN-3' in target genes promoters, including several genes involved in the plant hormone signal transduction pathway. Involved in the shoot architecture; positively regulates leaf inclination by affecting lamina joint cell elongation via the direct promotion of ILI4/BU1 and BC1 genes expression, especially in response to phosphate (Pi) availability. Regulates both brassinolide (BL) biosynthesis and signaling by directly activating BL-biosynthesis and signaling genes. This Oryza sativa subsp. japonica (Rice) protein is Myb family transcription factor RLI1.